Here is a 65-residue protein sequence, read N- to C-terminus: U12-theraphotoxin-Cg1a (65 aa).

An N-terminal signal peptide occupies residues 1–21 (MKTSVLLFMLGLTFLFDGLAA). Positions 22-29 (INLQEGER) are excised as a propeptide. 3 disulfides stabilise this stretch: Cys31–Cys45, Cys38–Cys50, and Cys44–Cys57.

This sequence belongs to the neurotoxin 10 (Hwtx-1) family. 31 (Jztx-15) subfamily. Expressed by the venom gland.

The protein resides in the secreted. In terms of biological role, probable ion channel inhibitor. This is U12-theraphotoxin-Cg1a from Chilobrachys guangxiensis (Chinese earth tiger tarantula).